The chain runs to 219 residues: Virginiamycin A acetyltransferase (219 aa).

Residue His-87 is part of the active site.

Belongs to the transferase hexapeptide repeat family.

In terms of biological role, inactivates the A compounds of virginiamycin-like antibiotics, thus providing resistance to these antibiotics. This chain is Virginiamycin A acetyltransferase (vat), found in Staphylococcus aureus.